The chain runs to 478 residues: Amino acid oxidase imqH (478 aa).

The N-terminal stretch at 1 to 22 is a signal peptide; sequence MPAPKSIIIVGSGVFGLSTAHA. V14, F15, D38, N53, A57, N58, R63, and I64 together coordinate FAD. N97 and N167 each carry an N-linked (GlcNAc...) asparagine glycan. V208 provides a ligand contact to FAD. S-8alpha-FAD cysteine is present on C399. FAD is bound by residues F432 and K433.

The protein belongs to the MSOX/MTOX family. As to quaternary structure, dimer. The cofactor is FAD.

The protein operates within secondary metabolite biosynthesis. Its function is as follows. Nonribosomal peptide synthetase; part of the gene cluster that mediates the biosynthesis of imizoquins A to D, tripeptide-derived alkaloids that serve a protective role against oxidative stress that are essential for normal germination. ImqB is a canonical three-module NRPS that assembles the tripeptide backbone of the imizoquins via condensation of Trp, Tyr, and Leu-derived precursors. N-methylation by imqF and phenol oxidation by imqC, followed by cyclization via the FAD-dependent oxidase imqH carry out the three-step transformation of L-tyrosine into tetrahydroisoquinoline. Importantly, this sequence requires the presence of a free amine in the tyrosine moiety, indicating that isoquinoline formation occurs prior to peptide bond formation. The imidazolidin-4-one ring of imizoquins could form following additional oxidation of the methyl-derived bridgehead carbon by imqH. Lastly, O-methylation by imqG and leucine hydroxylation by imqE complete biosynthesis of the imizoquins. The chain is Amino acid oxidase imqH from Aspergillus flavus (strain ATCC 200026 / FGSC A1120 / IAM 13836 / NRRL 3357 / JCM 12722 / SRRC 167).